We begin with the raw amino-acid sequence, 301 residues long: Pyridoxal 5'-phosphate synthase subunit Pdx1 (301 aa).

Asp-26 is a binding site for D-ribose 5-phosphate. Residue Lys-83 is the Schiff-base intermediate with D-ribose 5-phosphate of the active site. Position 155 (Gly-155) interacts with D-ribose 5-phosphate. Arg-167 lines the D-glyceraldehyde 3-phosphate pocket. Residues Gly-216 and 237–238 (GS) each bind D-ribose 5-phosphate.

It belongs to the PdxS/SNZ family. In terms of assembly, homohexamer and homododecamer. In the presence of Pdx2, forms a dodecamer of heterodimers.

The protein resides in the cytoplasm. It carries out the reaction aldehydo-D-ribose 5-phosphate + D-glyceraldehyde 3-phosphate + L-glutamine = pyridoxal 5'-phosphate + L-glutamate + phosphate + 3 H2O + H(+). Its pathway is cofactor biosynthesis; pyridoxal 5'-phosphate biosynthesis. Catalyzes the formation of pyridoxal 5'-phosphate from ribose 5-phosphate (RBP), glyceraldehyde 3-phosphate (G3P) and ammonia. The ammonia is provided by Pdx2. Can also use ribulose 5-phosphate and dihydroxyacetone phosphate as substrates, resulting from enzyme-catalyzed isomerization of RBP and G3P, respectively. The sequence is that of Pyridoxal 5'-phosphate synthase subunit Pdx1 (pdx1) from Plasmodium falciparum (isolate 3D7).